Consider the following 726-residue polypeptide: Catalase-peroxidase (726 aa).

The interval 1–33 (MSTTDDTHNTLSTGKCPFHQGGHDRSAGAGTAS) is disordered. The tryptophyl-tyrosyl-methioninium (Trp-Tyr) (with M-252) cross-link spans 105–226 (WHGAGTYRSI…LGATEMGLIY (122 aa)). His-106 (proton acceptor) is an active-site residue. A cross-link (tryptophyl-tyrosyl-methioninium (Tyr-Met) (with W-105)) is located at residues 226-252 (YVNPEGPDHSGEPLSAAAAIRATFGNM). Residue His-267 participates in heme b binding.

The protein belongs to the peroxidase family. Peroxidase/catalase subfamily. In terms of assembly, homodimer or homotetramer. Heme b is required as a cofactor. Post-translationally, formation of the three residue Trp-Tyr-Met cross-link is important for the catalase, but not the peroxidase activity of the enzyme.

The enzyme catalyses H2O2 + AH2 = A + 2 H2O. It carries out the reaction 2 H2O2 = O2 + 2 H2O. Its function is as follows. Bifunctional enzyme with both catalase and broad-spectrum peroxidase activity. This Salmonella choleraesuis (strain SC-B67) protein is Catalase-peroxidase.